Consider the following 302-residue polypeptide: Protein FdhE homolog (302 aa).

The protein belongs to the FdhE family.

It is found in the cytoplasm. Necessary for formate dehydrogenase activity. This chain is Protein FdhE homolog, found in Shewanella sp. (strain MR-4).